The sequence spans 242 residues: Probable transcriptional regulatory protein BURPS1710b_1385 (242 aa).

Belongs to the TACO1 family.

It localises to the cytoplasm. The polypeptide is Probable transcriptional regulatory protein BURPS1710b_1385 (Burkholderia pseudomallei (strain 1710b)).